The sequence spans 410 residues: Magnesium transporter NIPA3 (410 aa).

At 1–67 (MGAQVRLPPG…ISANVENKYS (67 aa)) the chain is on the extracellular side. Residues Asn-25, Asn-35, Asn-50, and Asn-55 are each glycosylated (N-linked (GlcNAc...) asparagine). The chain crosses the membrane as a helical span at residues 68–88 (LYVGLVLAVSSSIFIGSSFIL). At 89–114 (KKKGLLQLASKGFTRAGQGGHSYLKE) the chain is on the cytoplasmic side. The helical transmembrane segment at 115–135 (WLWWVGLLSMGAGEAANFAAY) threads the bilayer. Position 136 (Ala-136) is a topological domain, extracellular. A helical membrane pass occupies residues 137-157 (FAPATLVTPLGALSVLISAIL). Residues 158–165 (SSYFLNEH) are Cytoplasmic-facing. A helical membrane pass occupies residues 166–186 (LNIHGKIGCILSILGSTVMVI). The Extracellular portion of the chain corresponds to 187-207 (HAPQEEEVTSLHEMEMKLRDP). The helical transmembrane segment at 208–228 (GFISFAVIITVISLVLILIVA) threads the bilayer. Residues 229–233 (PKKGQ) are Cytoplasmic-facing. A helical transmembrane segment spans residues 234 to 254 (TNILVYISICSLIGAFSVSSV). The Extracellular segment spans residues 255–273 (KGLGIAIKELIEWKPVYKH). Residues 274–294 (PLVFVLLAVLVLSVTTQINYL) form a helical membrane-spanning segment. At 295–305 (NKALDTFNTSL) the chain is on the cytoplasmic side. A helical membrane pass occupies residues 306–326 (VTPIYYVFFTSMVVTCSAILF). The Extracellular segment spans residues 327 to 336 (QEWYGMTAGD). A helical membrane pass occupies residues 337–357 (IIGTLSGFFTIIIGIFLLHAF). Residues 358-410 (KNTDITWSELTSTAKKEAVSLNVNENNYVLLENLECSAPGYNDDVTLFSRTDD) are Cytoplasmic-facing.

This sequence belongs to the NIPA family. Expressed in the pancreatic islets.

The protein localises to the golgi apparatus membrane. The catalysed reaction is Mg(2+)(in) = Mg(2+)(out). Acts as a Mg(2+) transporter. Can also transport other divalent cations such as Fe(2+), Sr(2+), Ba(2+), Mn(2+), Cu(2+) and Co(2+) but to a much less extent than Mg(2+). In Homo sapiens (Human), this protein is Magnesium transporter NIPA3 (NIPAL1).